Reading from the N-terminus, the 180-residue chain is ATP synthase subunit delta (180 aa).

Belongs to the ATPase delta chain family. In terms of assembly, F-type ATPases have 2 components, F(1) - the catalytic core - and F(0) - the membrane proton channel. F(1) has five subunits: alpha(3), beta(3), gamma(1), delta(1), epsilon(1). F(0) has three main subunits: a(1), b(2) and c(10-14). The alpha and beta chains form an alternating ring which encloses part of the gamma chain. F(1) is attached to F(0) by a central stalk formed by the gamma and epsilon chains, while a peripheral stalk is formed by the delta and b chains.

The protein resides in the cell membrane. Functionally, f(1)F(0) ATP synthase produces ATP from ADP in the presence of a proton or sodium gradient. F-type ATPases consist of two structural domains, F(1) containing the extramembraneous catalytic core and F(0) containing the membrane proton channel, linked together by a central stalk and a peripheral stalk. During catalysis, ATP synthesis in the catalytic domain of F(1) is coupled via a rotary mechanism of the central stalk subunits to proton translocation. This protein is part of the stalk that links CF(0) to CF(1). It either transmits conformational changes from CF(0) to CF(1) or is implicated in proton conduction. This is ATP synthase subunit delta from Lactobacillus delbrueckii subsp. bulgaricus (strain ATCC 11842 / DSM 20081 / BCRC 10696 / JCM 1002 / NBRC 13953 / NCIMB 11778 / NCTC 12712 / WDCM 00102 / Lb 14).